Here is a 357-residue protein sequence, read N- to C-terminus: Guanine nucleotide-binding protein G(o) subunit alpha (357 aa).

The N-myristoyl glycine moiety is linked to residue Gly2. Cys3 carries the S-palmitoyl cysteine lipid modification. The G-alpha domain occupies 32–357 (KDIKLLLLGA…ANNLRGCGLY (326 aa)). Residues 35–48 (KLLLLGAGESGKST) form a G1 motif region. GTP-binding positions include 40-47 (GAGESGKS), 179-185 (LRTRVKT), 204-208 (DVGGQ), 273-276 (NKKD), and Ala329. Residues Ser47 and Thr185 each coordinate Mg(2+). The G2 motif stretch occupies residues 177–185 (DILRTRVKT). The tract at residues 200 to 209 (FKLFDVGGQR) is G3 motif. Residues 269–276 (ILFLNKKD) are G4 motif. Residues 327-332 (TCATDT) form a G5 motif region.

It belongs to the G-alpha family. G(i/o/t/z) subfamily. As to quaternary structure, g proteins are composed of 3 units; alpha, beta and gamma. The alpha chain contains the guanine nucleotide binding site.

In terms of biological role, guanine nucleotide-binding proteins (G proteins) are involved as modulators or transducers in various transmembrane signaling systems. The G(o) protein function is not clear. This chain is Guanine nucleotide-binding protein G(o) subunit alpha (SCGOA), found in Mizuhopecten yessoensis (Japanese scallop).